Here is a 287-residue protein sequence, read N- to C-terminus: rRNA adenine N-6-methyltransferase (287 aa).

The segment covering 1–13 has biased composition (basic residues); the sequence is MKKKNHKYRGKKL. Positions 1-21 are disordered; the sequence is MKKKNHKYRGKKLNRGESPNF. S-adenosyl-L-methionine-binding residues include His25, Met27, Gly52, Glu73, Asp98, and Asn114.

This sequence belongs to the class I-like SAM-binding methyltransferase superfamily. rRNA adenine N(6)-methyltransferase family. Homodimer.

In terms of biological role, involved in erythromycin resistance. This is rRNA adenine N-6-methyltransferase (ermJ) from Bacillus anthracis.